The chain runs to 312 residues: Olfactory receptor 4F3/4F16/4F29 (312 aa).

Topologically, residues 1–25 are extracellular; the sequence is MDGENHSVVSEFLFLGLTHSWEIQL. An N-linked (GlcNAc...) asparagine glycan is attached at N5. A helical transmembrane segment spans residues 26–49; it reads LLLVFSSVLYVASITGNILIVFSV. Topologically, residues 50-57 are cytoplasmic; that stretch reads TTDPHLHS. Residues 58-79 form a helical membrane-spanning segment; sequence PMYFLLASLSFIDLGACSVTSP. At 80-100 the chain is on the extracellular side; that stretch reads KMIYDLFRKRKVISFGGCIAQ. C97 and C189 are joined by a disulfide. Residues 101–120 form a helical membrane-spanning segment; that stretch reads IFFIHVVGGVEMVLLIAMAF. Over 121–139 the chain is Cytoplasmic; that stretch reads DRYVALCKPLHYLTIMSPR. Residues 140 to 158 form a helical membrane-spanning segment; it reads MCLSFLAVAWTLGVSHSLF. The Extracellular portion of the chain corresponds to 159-195; it reads QLAFLVNLAFCGPNVLDSFYCDLPRLLRLACTDTYRL. A helical membrane pass occupies residues 196 to 219; sequence QFMVTVNSGFICVGTFFILLISYV. Over 220–235 the chain is Cytoplasmic; sequence FILFTVWKHSSGGSSK. The chain crosses the membrane as a helical span at residues 236 to 258; sequence ALSTLSAHSTVVLLFFGPPMFVY. The Extracellular portion of the chain corresponds to 259–269; that stretch reads TRPHPNSQMDK. The helical transmembrane segment at 270-289 threads the bilayer; that stretch reads FLAIFDAVLTPFLNPVVYTF. Residues 290-312 are Cytoplasmic-facing; that stretch reads RNKEMKAAIKRVCKQLVIYKRIS.

This sequence belongs to the G-protein coupled receptor 1 family.

The protein resides in the cell membrane. Its function is as follows. Odorant receptor. This is Olfactory receptor 4F3/4F16/4F29 (OR4F3) from Homo sapiens (Human).